A 459-amino-acid chain; its full sequence is MAADVGQALAFLQQVKTTQGASIYEGLKAALAKVLEDRPVNAVEALETSVLSTPPAANLSVPLVPAASAAAAAAAVAKASLFGDPEPVLDPESGEPIDPDAPNEFECEDVEGDGDLLDGLGVGLGRQEMYAAMLAVKRLGEDAKRGVSTVRFFGKFFGTQADYYVFETTLQSNPDMPEAPEGTIPLEPYGEGVNAYIYFVSNTLGGPLQQLPYVTPEQIKASRLLRRYLTGRLDAPVSAFPAFPGNEANYLRALIARISAATVCCPRGFFTADDDSAELSANDEWVPLKGREMALPVNWSHRYAHLKGQGRTVTHKRDPPDEEEEPEKNFWTAEEMEAGPPPLATLDTDAPLPAATGDKVPPPAWSPVFASASVTTRNQVAGVRSNRWPGAVCACAGRHFTSMYVGWGIKAGGEWSPCPPPPPVPQWGAPAAGVEGGQQLLLECNDLPPKPAPPEEEDE.

The residue at position 267 (arginine 267) is an Asymmetric dimethylarginine. The interval 309 to 330 is disordered; that stretch reads QGRTVTHKRDPPDEEEEPEKNF. Arginine 398 is subject to Asymmetric dimethylarginine. Residues 418–459 are disordered; the sequence is CPPPPPVPQWGAPAAGVEGGQQLLLECNDLPPKPAPPEEEDE.

The protein belongs to the flagellar radial spoke RSP4/6 family. The radial spoke head is made of five different polypeptides (RSP1, RSP4, RSP6, RSP9, and RSP10). Asymmetrically dimethylated at Arg-267 and Arg-398 during flagellum resorption. Probably methylated by PRMT1.

The protein resides in the cytoplasm. It localises to the cytoskeleton. It is found in the flagellum axoneme. Its function is as follows. Flagellar radial spokes contribute to the regulation of dynein arm activity and thus the pattern of flagellar bending. They consist of a thin stalk, which is attached to the a subfiber of the outer doublet microtubule, and a bulbous head, which is attached to the stalk and appears to interact with the projections from the central pair of microtubules. The sequence is that of Flagellar radial spoke protein 6 (RSP6) from Chlamydomonas reinhardtii (Chlamydomonas smithii).